We begin with the raw amino-acid sequence, 619 residues long: Manganese lipoxygenase (619 aa).

The first 16 residues, M1–A16, serve as a signal peptide directing secretion. Residues N32, N42, N62, N86, N164, and N229 are each glycosylated (N-linked (GlcNAc...) asparagine). A Lipoxygenase domain is found at T55–V619. 4 residues coordinate Mn(2+): H298, H303, H483, and N487. N-linked (GlcNAc...) asparagine glycosylation is found at N515 and N549. V619 contributes to the Mn(2+) binding site.

Belongs to the lipoxygenase family. Manganese lipoxygenase subfamily. The cofactor is Mn(2+).

It localises to the secreted. It catalyses the reaction (9Z,12Z)-octadecadienoate + O2 = (9S)-hydroperoxy-(10E,12Z)-octadecadienoate. The enzyme catalyses (9Z,12Z)-octadecadienoate + O2 = (11S)-hydroperoxy-(9Z,12Z)-octadecadienoate. The catalysed reaction is (9Z,12Z)-octadecadienoate + O2 = (13R)-hydroperoxy-(9Z,11E)-octadecadienoate. It carries out the reaction (9Z,12Z,15Z)-octadecatrienoate + O2 = (9S)-hydroperoxy-(10E,12Z,15Z)-octadecatrienoate. It catalyses the reaction (9Z,12Z,15Z)-octadecatrienoate + O2 = (11R)-hydroperoxy-(9Z,12Z,15Z)-octadecatrienoate. The enzyme catalyses (9Z,12Z,15Z)-octadecatrienoate + O2 = (13R)-hydroperoxy-(9Z,11E,15Z)-octadecatrienoate. The catalysed reaction is (9S)-hydroperoxy-(10E,12Z,15Z)-octadecatrienoate + O2 = (9S,16S)-dihydroperoxy-(10E,12Z,14E)-octadecatrienoate. Lipoxygenase that metabolizes linoleic and alpha-linolenic acids to 9S-, 11- and 13R-hydroperoxy fatty acids. At the end of lipoxygenation, the intermediate product 11S-HPODE from linoleic acid is then transformed into 9S-HPODE and 13R-HPODE as the final products. The intermediate product 11R-HPOTrE from alpha-linolenic acid is transformed into 9S-HPOTrE and 13R-HPOTrE as the final products. 9S-HPOTrE is further oxidized by the enzyme to 9S,16S-DiHPOTrE as the end product. The polypeptide is Manganese lipoxygenase (Pyricularia oryzae (strain 70-15 / ATCC MYA-4617 / FGSC 8958) (Rice blast fungus)).